The following is a 485-amino-acid chain: Apolipoprotein N-acyltransferase (485 aa).

6 helical membrane-spanning segments follow: residues 8-28 (IAGA…IAFV), 49-69 (GWLF…VSIH), 76-96 (VPLA…FIAF), 121-141 (WWVV…WLFL), 157-177 (FGIY…YLLV), and 186-206 (IMCL…TFIP). In terms of domain architecture, CN hydrolase spans 220–457 (VQGNIGQRLK…RLLLTGQIKP (238 aa)). Glu-259 serves as the catalytic Proton acceptor. Residue Lys-317 is part of the active site. Cys-369 functions as the Nucleophile in the catalytic mechanism. The chain crosses the membrane as a helical span at residues 464–484 (LMRWNYYPVVGIIIIFLLLTF).

It belongs to the CN hydrolase family. Apolipoprotein N-acyltransferase subfamily.

The protein resides in the cell inner membrane. It carries out the reaction N-terminal S-1,2-diacyl-sn-glyceryl-L-cysteinyl-[lipoprotein] + a glycerophospholipid = N-acyl-S-1,2-diacyl-sn-glyceryl-L-cysteinyl-[lipoprotein] + a 2-acyl-sn-glycero-3-phospholipid + H(+). Its pathway is protein modification; lipoprotein biosynthesis (N-acyl transfer). Its function is as follows. Catalyzes the phospholipid dependent N-acylation of the N-terminal cysteine of apolipoprotein, the last step in lipoprotein maturation. This chain is Apolipoprotein N-acyltransferase, found in Coxiella burnetii (strain RSA 493 / Nine Mile phase I).